Reading from the N-terminus, the 524-residue chain is Beta-glucosidase 21 (524 aa).

Positions 1 to 24 are cleaved as a signal peptide; that stretch reads MALQKFPLMGLLLLLTILVSVTTA. Gln-55 contributes to the a beta-D-glucoside binding site. N-linked (GlcNAc...) asparagine glycosylation is present at Asn-61. A beta-D-glucoside contacts are provided by residues His-158 and 203–204; that span reads NE. Glu-204 functions as the Proton donor in the catalytic mechanism. Cys-223 and Cys-230 are disulfide-bonded. A beta-D-glucoside contacts are provided by residues Tyr-346, Glu-418, Trp-468, 475–476, and Phe-484; that span reads EW. Glu-418 functions as the Nucleophile in the catalytic mechanism. The N-linked (GlcNAc...) asparagine glycan is linked to Asn-494. Residues 521 to 524 carry the Prevents secretion from ER motif; that stretch reads RDEL.

The protein belongs to the glycosyl hydrolase 1 family. In terms of assembly, component of the PYK10 complex, at least composed of PYK10/BGLU23, BGLU21, BGLU22, JAL22, JAL23, PBP1/JAL30, PBP2/JAL31, JAL32, JAL33, JAL34, JAL35, GLL22 and GLL23. As to expression, expressed exclusively in roots.

The protein resides in the endoplasmic reticulum lumen. The catalysed reaction is Hydrolysis of terminal, non-reducing beta-D-glucosyl residues with release of beta-D-glucose.. Activated upon binding to PBP1 or PBP2. Functionally, beta-D-glucosidase active on scopolin &gt;&gt; esculin &gt;&gt; 4-MU-glucoside &gt; DIMBOA-glucoside. No activity with pNP-glucoside, oNP-glucoside and sinigrin as substrates. The polypeptide is Beta-glucosidase 21 (Arabidopsis thaliana (Mouse-ear cress)).